Here is a 141-residue protein sequence, read N- to C-terminus: Hemoglobin subunit alpha (141 aa).

The Globin domain maps to V1 to R141. Position 3 is a phosphoserine (S3). N6-succinyllysine is present on residues K7 and K11. Position 16 is an N6-acetyllysine; alternate (K16). K16 bears the N6-succinyllysine; alternate mark. Y24 bears the Phosphotyrosine mark. S35 is modified (phosphoserine). Residue K40 is modified to N6-succinyllysine. S49 carries the post-translational modification Phosphoserine. Residue H58 coordinates O2. H87 contacts heme b. At S102 the chain carries Phosphoserine. At T108 the chain carries Phosphothreonine. 2 positions are modified to phosphoserine: S124 and S131. Phosphothreonine is present on residues T134 and T137. S138 bears the Phosphoserine mark.

It belongs to the globin family. As to quaternary structure, heterotetramer of two alpha chains and two beta chains. Red blood cells.

In terms of biological role, involved in oxygen transport from the lung to the various peripheral tissues. In Peromyscus californicus (California mouse), this protein is Hemoglobin subunit alpha.